The primary structure comprises 158 residues: Protein NrdI (158 aa).

It belongs to the NrdI family.

Its function is as follows. Probably involved in ribonucleotide reductase function. The chain is Protein NrdI from Rhodococcus jostii (strain RHA1).